We begin with the raw amino-acid sequence, 733 residues long: Phosphoribosylformylglycinamidine synthase subunit PurL (733 aa).

Histidine 44 is an active-site residue. Residues tyrosine 47 and lysine 86 each coordinate ATP. Position 88 (glutamate 88) interacts with Mg(2+). Residues serine 89–histidine 92 and arginine 111 contribute to the substrate site. Histidine 90 (proton acceptor) is an active-site residue. Aspartate 112 lines the Mg(2+) pocket. Glutamine 233 contributes to the substrate binding site. Residue aspartate 261 coordinates Mg(2+). Glutamate 305 to glutamine 307 is a binding site for substrate. The ATP site is built by aspartate 492 and glycine 529. Mg(2+) is bound at residue asparagine 530. Serine 532 contacts substrate.

The protein belongs to the FGAMS family. Monomer. Part of the FGAM synthase complex composed of 1 PurL, 1 PurQ and 2 PurS subunits.

It is found in the cytoplasm. It carries out the reaction N(2)-formyl-N(1)-(5-phospho-beta-D-ribosyl)glycinamide + L-glutamine + ATP + H2O = 2-formamido-N(1)-(5-O-phospho-beta-D-ribosyl)acetamidine + L-glutamate + ADP + phosphate + H(+). The protein operates within purine metabolism; IMP biosynthesis via de novo pathway; 5-amino-1-(5-phospho-D-ribosyl)imidazole from N(2)-formyl-N(1)-(5-phospho-D-ribosyl)glycinamide: step 1/2. Its function is as follows. Part of the phosphoribosylformylglycinamidine synthase complex involved in the purines biosynthetic pathway. Catalyzes the ATP-dependent conversion of formylglycinamide ribonucleotide (FGAR) and glutamine to yield formylglycinamidine ribonucleotide (FGAM) and glutamate. The FGAM synthase complex is composed of three subunits. PurQ produces an ammonia molecule by converting glutamine to glutamate. PurL transfers the ammonia molecule to FGAR to form FGAM in an ATP-dependent manner. PurS interacts with PurQ and PurL and is thought to assist in the transfer of the ammonia molecule from PurQ to PurL. This chain is Phosphoribosylformylglycinamidine synthase subunit PurL, found in Thermomicrobium roseum (strain ATCC 27502 / DSM 5159 / P-2).